The following is a 247-amino-acid chain: ATP synthase subunit a, chloroplastic (247 aa).

A run of 5 helical transmembrane segments spans residues 38–58, 95–115, 134–154, 199–219, and 220–240; these read QVLITSWVVIAILLGSATLAV, VPFIGTMFLFIFVSNWSGALL, INTTVALALLTSVAYFYAGLT, LVVVVLVSLVPSVVPIPVMFL, and GLFTSGIQALIFATLAAAYIG.

It belongs to the ATPase A chain family. In terms of assembly, F-type ATPases have 2 components, CF(1) - the catalytic core - and CF(0) - the membrane proton channel. CF(1) has five subunits: alpha(3), beta(3), gamma(1), delta(1), epsilon(1). CF(0) has four main subunits: a, b, b' and c.

The protein resides in the plastid. Its subcellular location is the chloroplast thylakoid membrane. Its function is as follows. Key component of the proton channel; it plays a direct role in the translocation of protons across the membrane. This chain is ATP synthase subunit a, chloroplastic, found in Jasminum nudiflorum (Winter jasmine).